A 252-amino-acid polypeptide reads, in one-letter code: tRNA1(Val) (adenine(37)-N6)-methyltransferase (252 aa).

The protein belongs to the methyltransferase superfamily. tRNA (adenine-N(6)-)-methyltransferase family.

The protein resides in the cytoplasm. It catalyses the reaction adenosine(37) in tRNA1(Val) + S-adenosyl-L-methionine = N(6)-methyladenosine(37) in tRNA1(Val) + S-adenosyl-L-homocysteine + H(+). In terms of biological role, specifically methylates the adenine in position 37 of tRNA(1)(Val) (anticodon cmo5UAC). This Yersinia pseudotuberculosis serotype IB (strain PB1/+) protein is tRNA1(Val) (adenine(37)-N6)-methyltransferase.